A 495-amino-acid polypeptide reads, in one-letter code: Carotenoid 3,4-desaturase (495 aa).

It belongs to the carotenoid/retinoid oxidoreductase family.

It carries out the reaction dihydroisopentenyldehydrorhodopin + A = isopentenyldehydrorhodopin + AH2. The catalysed reaction is dihydrobisanhydrobacterioruberin + A = bisanhydrobacterioruberin + AH2. The protein operates within carotenoid biosynthesis. Functionally, involved in the biosynthesis of the acyclic C50 carotenoid bacterioruberin (BR). CrtD is involved in the desaturation reactions that form double bonds at C-3,4 of dihydroisopentenyldehydrorhodopin (DH-IDR) and C-3',4' of dihydrobisanhydrobacterioruberin (DH-BABR) to yield isopentenyld ehydrorhodopin (IDR) and bisanhydrobacterioruberin (BABR), respectively. This is Carotenoid 3,4-desaturase from Haloarcula japonica (strain ATCC 49778 / DSM 6131 / JCM 7785 / NBRC 101032 / NCIMB 13157 / TR-1).